Reading from the N-terminus, the 374-residue chain is Phosphate-binding protein PstS 1 (374 aa).

Positions Met-1–Gly-23 are cleaved as a signal peptide. A lipid anchor (N-palmitoyl cysteine) is attached at Cys-24. A lipid anchor (S-diacylglycerol cysteine) is attached at Cys-24. The tract at residues Gly-25–Ser-48 is disordered. Residues Ser-58 to Leu-60, Ser-88, Asp-106, and Ser-189 to Asp-191 each bind phosphate.

Belongs to the PstS family. In terms of assembly, the complex is composed of two ATP-binding proteins (PstB), two transmembrane proteins (PstC and PstA) and a solute-binding protein (PstS).

The protein resides in the cell membrane. Functionally, part of the ABC transporter complex PstSACB involved in phosphate import. In Mycobacterium tuberculosis (strain CDC 1551 / Oshkosh), this protein is Phosphate-binding protein PstS 1 (pstS1).